Here is a 182-residue protein sequence, read N- to C-terminus: Protein canopy homolog 2 (182 aa).

Residues 1 to 20 form the signal peptide; the sequence is MKGWGWLALLLGALLGTAWA. Residues 24–175 form the Saposin B-type domain; the sequence is QDLHCGACRA…KRTDLCDHAL (152 aa). Disulfide bonds link cysteine 28-cysteine 171, cysteine 31-cysteine 164, and cysteine 86-cysteine 137. Serine 115 is modified (phosphoserine). The Prevents secretion from ER signature appears at 179–182; the sequence is HDEL.

Belongs to the canopy family. As to quaternary structure, interacts with MYLIP/MIR. In terms of tissue distribution, expressed in different tissues. Highest levels are detected in adult placenta, liver and pancreas.

It is found in the endoplasmic reticulum. Functionally, positive regulator of neurite outgrowth by stabilizing myosin regulatory light chain (MRLC). It prevents MIR-mediated MRLC ubiquitination and its subsequent proteasomal degradation. This chain is Protein canopy homolog 2 (CNPY2), found in Homo sapiens (Human).